A 259-amino-acid polypeptide reads, in one-letter code: Type III pantothenate kinase (259 aa).

An ATP-binding site is contributed by 6–13 (DVGNTNIV). Residues Tyr100 and 107-110 (GADR) each bind substrate. Asp109 serves as the catalytic Proton acceptor. Asp129 serves as a coordination point for K(+). Thr132 contributes to the ATP binding site. Thr184 provides a ligand contact to substrate.

Belongs to the type III pantothenate kinase family. In terms of assembly, homodimer. It depends on NH4(+) as a cofactor. K(+) is required as a cofactor.

It is found in the cytoplasm. It carries out the reaction (R)-pantothenate + ATP = (R)-4'-phosphopantothenate + ADP + H(+). It participates in cofactor biosynthesis; coenzyme A biosynthesis; CoA from (R)-pantothenate: step 1/5. Its function is as follows. Catalyzes the phosphorylation of pantothenate (Pan), the first step in CoA biosynthesis. The protein is Type III pantothenate kinase of Clostridium perfringens (strain ATCC 13124 / DSM 756 / JCM 1290 / NCIMB 6125 / NCTC 8237 / Type A).